A 681-amino-acid chain; its full sequence is Sorting nexin-41 (681 aa).

The segment covering 1-12 has biased composition (acidic residues); it reads MSTDNLFEDIEQ. The tract at residues 1 to 94 is disordered; that stretch reads MSTDNLFEDI…HNTSLNNGYP (94 aa). Residues 13-24 show a composition bias toward polar residues; it reads DNNPSFYGNPSI. The PX domain occupies 113–236; that stretch reads NDSQLQVDII…KFFDPNYELC (124 aa). Residues arginine 151, serine 153, lysine 177, and arginine 200 each contribute to the a 1,2-diacyl-sn-glycero-3-phospho-(1D-myo-inositol-3-phosphate) site. Disordered stretches follow at residues 475 to 505 and 558 to 597; these read LASR…TENF and TATG…QTSI. 2 stretches are compositionally biased toward low complexity: residues 482–497 and 558–589; these read DNDS…NNND and TATG…QSQS.

The protein belongs to the sorting nexin family.

It is found in the endosome membrane. The protein resides in the endomembrane system. Functionally, may be required for cytoplasm to vacuole transport (Cvt) and pexophagy. The polypeptide is Sorting nexin-41 (SNX41) (Candida albicans (strain SC5314 / ATCC MYA-2876) (Yeast)).